Here is a 369-residue protein sequence, read N- to C-terminus: Small ribosomal subunit biogenesis GTPase RsgA (369 aa).

Positions 116–271 (GEQLIAANLD…LIDNPGIREI (156 aa)) constitute a CP-type G domain. GTP is bound by residues 161–164 (NKID) and 213–221 (GSSGVGKST). The Zn(2+) site is built by Cys-294, Cys-299, His-301, and Cys-307.

This sequence belongs to the TRAFAC class YlqF/YawG GTPase family. RsgA subfamily. In terms of assembly, monomer. Associates with 30S ribosomal subunit, binds 16S rRNA. Requires Zn(2+) as cofactor.

Its subcellular location is the cytoplasm. Its function is as follows. One of several proteins that assist in the late maturation steps of the functional core of the 30S ribosomal subunit. Helps release RbfA from mature subunits. May play a role in the assembly of ribosomal proteins into the subunit. Circularly permuted GTPase that catalyzes slow GTP hydrolysis, GTPase activity is stimulated by the 30S ribosomal subunit. The protein is Small ribosomal subunit biogenesis GTPase RsgA of Methanosarcina acetivorans (strain ATCC 35395 / DSM 2834 / JCM 12185 / C2A).